The following is a 146-amino-acid chain: Ribosomal RNA large subunit methyltransferase H (146 aa).

S-adenosyl-L-methionine contacts are provided by residues L60, G93, and 112–117 (MGKMTL).

The protein belongs to the RNA methyltransferase RlmH family. In terms of assembly, homodimer.

It localises to the cytoplasm. It carries out the reaction pseudouridine(1915) in 23S rRNA + S-adenosyl-L-methionine = N(3)-methylpseudouridine(1915) in 23S rRNA + S-adenosyl-L-homocysteine + H(+). In terms of biological role, specifically methylates the pseudouridine at position 1915 (m3Psi1915) in 23S rRNA. In Koribacter versatilis (strain Ellin345), this protein is Ribosomal RNA large subunit methyltransferase H.